The sequence spans 472 residues: Glutamine synthetase (472 aa).

In terms of domain architecture, GS beta-grasp spans 17 to 101 (NNVKFVLLRF…IRCSVYEPTT (85 aa)). The region spanning 109–472 (PRSIAIRAEN…HPVEFEMYYA (364 aa)) is the GS catalytic domain. The Mg(2+) site is built by glutamate 134 and glutamate 136. Glutamate 212 contributes to the ATP binding site. Glutamate 217 and glutamate 225 together coordinate Mg(2+). Residues 269 to 270 (NG) and glycine 270 each bind L-glutamate. Histidine 274 serves as a coordination point for Mg(2+). Residues 276–278 (NMS) and serine 278 each bind ATP. L-glutamate-binding residues include arginine 326, glutamate 332, and arginine 344. ATP-binding residues include arginine 344, arginine 349, and lysine 357. Glutamate 362 serves as a coordination point for Mg(2+). Arginine 364 provides a ligand contact to L-glutamate. Tyrosine 402 carries the post-translational modification O-AMP-tyrosine.

Belongs to the glutamine synthetase family. As to quaternary structure, oligomer of 12 subunits arranged in the form of two hexameric ring. Mg(2+) serves as cofactor.

The protein resides in the cytoplasm. The catalysed reaction is L-glutamate + NH4(+) + ATP = L-glutamine + ADP + phosphate + H(+). The activity of this enzyme could be controlled by adenylation under conditions of abundant glutamine. Functionally, catalyzes the ATP-dependent biosynthesis of glutamine from glutamate and ammonia. In Haemophilus influenzae (strain ATCC 51907 / DSM 11121 / KW20 / Rd), this protein is Glutamine synthetase.